Here is a 259-residue protein sequence, read N- to C-terminus: uncharacterized protein (259 aa).

Positions Q110–T259 constitute an N-acetyltransferase domain.

May be involved in maturation of the outermost layer of the spore. This is an uncharacterized protein from Bacillus subtilis (strain 168).